The primary structure comprises 883 residues: Glutamate receptor 2 (883 aa).

The first 24 residues, 1-24 (MQKIMHISVLLSPVLWGLIFGVSS), serve as a signal peptide directing secretion. Residues 25-543 (NSIQIGGLFP…GVFSFLDPLA (519 aa)) are Extracellular-facing. Cysteine 78 and cysteine 330 form a disulfide bridge. N-linked (GlcNAc...) asparagine glycans are attached at residues asparagine 256, asparagine 370, asparagine 406, and asparagine 413. L-glutamate contacts are provided by proline 499, threonine 501, and arginine 506. The chain crosses the membrane as a helical span at residues 544-564 (YEIWMCIVFAYIGVSVVLFLV). Residues 565 to 591 (SRFSPYEWHTEEFEDGRETQSSESTNE) lie on the Cytoplasmic side of the membrane. The helical; Pore-forming intramembrane region spans 592-607 (FGIFNSLWFSLGAFMQ). The stretch at 608-610 (QGC) is an intramembrane region. Cysteine 610 is lipidated: S-palmitoyl cysteine. Over 611 to 616 (DISPRS) the chain is Cytoplasmic. Residues 617–637 (LSGRIVGGVWWFFTLIIISSY) traverse the membrane as a helical segment. The Extracellular portion of the chain corresponds to 638 to 812 (TANLAAFLTV…EKTSALSLSN (175 aa)). Serine 675 and threonine 676 together coordinate L-glutamate. Serine 683 bears the Phosphoserine; by PKC mark. Residue serine 717 is modified to Phosphoserine; by PKG. L-glutamate is bound at residue glutamate 726. Cysteines 739 and 794 form a disulfide. The helical transmembrane segment at 813–833 (VAGVFYILVGGLGLAMLVALI) threads the bilayer. The Cytoplasmic portion of the chain corresponds to 834–883 (EFCYKSRAEAKRMKVAKNAQNINPSSSQNSQNFATYKEGYNVYGIESVKI). Residue cysteine 836 is the site of S-palmitoyl cysteine attachment. Serine 860 and serine 863 each carry phosphoserine. The segment at 867-877 (ATYKEGYNVYG) is required for interaction with IQSEC1. Tyrosine 876 carries the phosphotyrosine modification. At serine 880 the chain carries Phosphoserine.

It belongs to the glutamate-gated ion channel (TC 1.A.10.1) family. GRIA2 subfamily. In terms of assembly, homotetramer or heterotetramer of pore-forming glutamate receptor subunits. Tetramers may be formed by the dimerization of dimers. May interact with MPP4. Forms a ternary complex with GRIP1 and CSPG4. Interacts with ATAD1 in an ATP-dependent manner. ATAD1-catalyzed ATP hydrolysis disrupts binding to ATAD1 and to GRIP1 and leads to AMPAR complex disassembly. Interacts with GRIP1 and GRIP2. Interacts with NSF via its C-terminus. Isoform 1, but not isoform 3, interacts with PICK1. Interacts with CACNG2. Interacts with GRIA1 and SYNDIG1. Part of a complex containing GRIA2, NSF and NAPA and/or NAPB. Interacts with SNX27 (via PDZ domain); the interaction is required for recycling to the plasma membrane when endocytosed and prevent degradation in lysosomes. Interacts with LRFN1. Found in a complex with GRIA1, GRIA3, GRIA4, CNIH2, CNIH3, CACNG2, CACNG3, CACNG4, CACNG5, CACNG7 and CACNG8. Interacts with CACNG5. Interacts with OLFM2. Interacts with AP4B1, AP4E1 and AP4M1; probably indirect it mediates the somatodendritic localization of GRIA2 in neurons. Forms a complex with GRIP1, NSG1 and STX12; controls the intracellular fate of AMPAR and the endosomal sorting of the GRIA2 subunit toward recycling and membrane targeting. Interacts with IQSEC1; the interaction is required for ARF6 activation. Interacts (heterotetramer form) with CNIH2 and CNIH3; this interaction promotes expression at the plasma membrane and extensively modulates their gating properties by slowing deactivation and desensitization kinetics. Palmitoylated. Depalmitoylated upon L-glutamate stimulation. ZDHHC3/GODZ specifically palmitoylates Cys-610, which leads to Golgi retention and decreased cell surface expression. In contrast, Cys-836 palmitoylation does not affect cell surface expression but regulates stimulation-dependent endocytosis. In terms of processing, N-glycosylated. Post-translationally, ubiquitinated by RNF167, leading to its degradation. Phosphorylation at Tyr-876 is required for interaction with IQSEC1 and ARF6 activation, which in turn triggers AMPAR internalization for persistent synaptic depression. Detected in brain cortex, hippocampus and cerebellum (at protein level). Detected in hippocampus.

The protein localises to the cell membrane. Its subcellular location is the postsynaptic cell membrane. It localises to the postsynaptic density membrane. It carries out the reaction Ca(2+)(in) = Ca(2+)(out). The catalysed reaction is Na(+)(in) = Na(+)(out). Functionally, ionotropic glutamate receptor that functions as a ligand-gated cation channel, gated by L-glutamate and glutamatergic agonists such as alpha-amino-3-hydroxy-5-methyl-4-isoxazolepropionic acid (AMPA), quisqualic acid, and kainic acid. L-glutamate acts as an excitatory neurotransmitter at many synapses in the central nervous system and plays an important role in fast excitatory synaptic transmission. Binding of the excitatory neurotransmitter L-glutamate induces a conformation change, leading to the opening of the cation channel, and thereby converts the chemical signal to an electrical impulse upon entry of monovalent and divalent cations such as sodium and calcium. The receptor then desensitizes rapidly and enters in a transient inactive state, characterized by the presence of bound agonist. In the presence of CACNG4 or CACNG7 or CACNG8, shows resensitization which is characterized by a delayed accumulation of current flux upon continued application of L-glutamate. Through complex formation with NSG1, GRIP1 and STX12 controls the intracellular fate of AMPAR and the endosomal sorting of the GRIA2 subunit toward recycling and membrane targeting. The protein is Glutamate receptor 2 of Mus musculus (Mouse).